Here is an 892-residue protein sequence, read N- to C-terminus: Alanine--tRNA ligase (892 aa).

Histidine 565, histidine 569, cysteine 678, and histidine 682 together coordinate Zn(2+). The segment at 857–876 is disordered; the sequence is GGKGGGGRPDMAQAGGPDGA.

This sequence belongs to the class-II aminoacyl-tRNA synthetase family. Zn(2+) is required as a cofactor.

It localises to the cytoplasm. It catalyses the reaction tRNA(Ala) + L-alanine + ATP = L-alanyl-tRNA(Ala) + AMP + diphosphate. Catalyzes the attachment of alanine to tRNA(Ala) in a two-step reaction: alanine is first activated by ATP to form Ala-AMP and then transferred to the acceptor end of tRNA(Ala). Also edits incorrectly charged Ser-tRNA(Ala) and Gly-tRNA(Ala) via its editing domain. This is Alanine--tRNA ligase from Bradyrhizobium diazoefficiens (strain JCM 10833 / BCRC 13528 / IAM 13628 / NBRC 14792 / USDA 110).